We begin with the raw amino-acid sequence, 482 residues long: ATP synthase subunit beta (482 aa).

167–174 (GGAGVGKT) contributes to the ATP binding site.

This sequence belongs to the ATPase alpha/beta chains family. In terms of assembly, F-type ATPases have 2 components, CF(1) - the catalytic core - and CF(0) - the membrane proton channel. CF(1) has five subunits: alpha(3), beta(3), gamma(1), delta(1), epsilon(1). CF(0) has three main subunits: a(1), b(2) and c(9-12). The alpha and beta chains form an alternating ring which encloses part of the gamma chain. CF(1) is attached to CF(0) by a central stalk formed by the gamma and epsilon chains, while a peripheral stalk is formed by the delta and b chains.

Its subcellular location is the cell membrane. The enzyme catalyses ATP + H2O + 4 H(+)(in) = ADP + phosphate + 5 H(+)(out). Functionally, produces ATP from ADP in the presence of a proton gradient across the membrane. The catalytic sites are hosted primarily by the beta subunits. This chain is ATP synthase subunit beta, found in Corynebacterium aurimucosum (strain ATCC 700975 / DSM 44827 / CIP 107346 / CN-1) (Corynebacterium nigricans).